A 142-amino-acid polypeptide reads, in one-letter code: Transcriptional regulator MraZ (142 aa).

SpoVT-AbrB domains lie at Ala-5–Val-51 and Ala-77–Arg-120.

It belongs to the MraZ family. Forms oligomers.

It localises to the cytoplasm. It is found in the nucleoid. This chain is Transcriptional regulator MraZ, found in Herminiimonas arsenicoxydans.